An 85-amino-acid chain; its full sequence is Putative membrane protein insertion efficiency factor (85 aa).

Belongs to the UPF0161 family.

The protein localises to the cell inner membrane. Functionally, could be involved in insertion of integral membrane proteins into the membrane. In Escherichia coli O157:H7, this protein is Putative membrane protein insertion efficiency factor.